We begin with the raw amino-acid sequence, 192 residues long: Flavin prenyltransferase UbiX (192 aa).

FMN contacts are provided by residues 10-12 (GAS), S36, 92-95 (SMTT), and R127. Y157 and K173 together coordinate dimethylallyl phosphate.

This sequence belongs to the UbiX/PAD1 family.

It carries out the reaction dimethylallyl phosphate + FMNH2 = prenylated FMNH2 + phosphate. Flavin prenyltransferase that catalyzes the synthesis of the prenylated FMN cofactor (prenyl-FMN) for 4-hydroxy-3-polyprenylbenzoic acid decarboxylase UbiD. The prenyltransferase is metal-independent and links a dimethylallyl moiety from dimethylallyl monophosphate (DMAP) to the flavin N5 and C6 atoms of FMN. This chain is Flavin prenyltransferase UbiX, found in Chlamydia pneumoniae (Chlamydophila pneumoniae).